The chain runs to 655 residues: Epithelial sodium channel subunit gamma (655 aa).

Over 1–55 the chain is Cytoplasmic; it reads MAPGEKIKAKIKKNLPVRGPQAPTIKDLMHWYCLNTNTHGCRRIVVSRGRLRRLL. Residues 56–76 form a helical membrane-spanning segment; that stretch reads WIAFTLTAVALIIWQCALLVF. Over 77 to 547 the chain is Extracellular; it reads SFYTVSVSIK…GGQLGLWMSC (471 aa). Cystine bridges form between Cys100-Cys289, Cys213-Cys220, Cys266-Cys273, Cys378-Cys463, Cys400-Cys459, Cys404-Cys455, Cys413-Cys440, and Cys415-Cys429. Residues 140–227 are gating release of inhibition by proteolysis (GRIP); protease-sensitive region that is responsible for the proteolytic activation of the channel; that stretch reads RKRREAGSMR…SDCATYTFSS (88 aa). A glycan (N-linked (GlcNAc...) asparagine) is linked at Asn215. Asn277 carries an N-linked (GlcNAc...) asparagine glycan. N-linked (GlcNAc...) asparagine glycosylation is present at Asn503. The helical transmembrane segment at 548 to 568 threads the bilayer; that stretch reads SVVCVIEIIEVFFIDFFSIIA. Over 569-655 the chain is Cytoplasmic; sequence RRQWQKAKDW…LTDTQLTNEF (87 aa). The segment at 582 to 636 is disordered; that stretch reads RRTPPSTETPSSQQGQDNPALDTDDDLPTFTSAMRLPPAPEAPVPGTPPPRYNTL. Residues 585 to 598 show a composition bias toward polar residues; it reads PPSTETPSSQQGQD. Residues 618–632 are compositionally biased toward pro residues; that stretch reads PPAPEAPVPGTPPPR. The short motif at 629 to 633 is the PY motif; recruits WW domain-containing proteins and is thereby required for ubiquitination and inhibition of the channel by NEDD4 and NEDD4L element; the sequence is PPPRY.

The protein belongs to the amiloride-sensitive sodium channel (TC 1.A.6) family. SCNN1G subfamily. As to quaternary structure, component of the heterotrimeric epithelial sodium channel (ENaC) composed of an alpha/SCNN1A, a beta/SCNN1B and a gamma/SCNN1G subunit. Interacts with WWP1 (via WW domains). Interacts with WWP2 (via WW domains); inhibits the channel. Interacts with the full-length immature form of PCSK9 (pro-PCSK9); inhibits ENaC by promoting its proteasomal degradation. Interacts with BPIFA1; the interaction is indirect via SCNN1B and inhibits the proteolytic maturation of SCNN1A and SCNN1G and the activation of ENaC. In terms of processing, phosphorylated on serine and threonine residues. Aldosterone and insulin increase the basal level of phosphorylation. Ubiquitinated. Can be ubiquitinated at multiple sites and undergo monoubiquitination and polyubiquitination. Ubiquitination by NEDD4 or NEDD4L inhibits the ENaC channel through endocytosis, intracellular retention and degradation of its individual subunits. Post-translationally, ENaC is activated through the proteolytic maturation of its subunits. Furin cleaves the SCNN1G subunit first, followed by cleavage by prostasin (PRSS8), which results in a stepwise increase in the open probability of the channel due to the release of an inhibitory tract. BPIFA1, which is recruited by the SCNN1B subunit, prevents the proteolytic activation of ENaC. In terms of processing, N-glycosylated. N-linked glycans are processed to complex type during ENaC complex assembly and transport to the plasma membrane. As to expression, lung and kidney.

It is found in the apical cell membrane. It catalyses the reaction Na(+)(in) = Na(+)(out). Originally identified and characterized by its inhibition by the diuretic drug amiloride. Its function is as follows. This is one of the three pore-forming subunits of the heterotrimeric epithelial sodium channel (ENaC), a critical regulator of sodium balance and fluid homeostasis. ENaC operates in epithelial tissues, where it mediates the electrodiffusion of sodium ions from extracellular fluid through the apical membrane of cells, with water following osmotically. It plays a key role in maintaining sodium homeostasis through electrogenic sodium reabsorption in the kidneys. Additionally, ENaC is essential for airway surface liquid homeostasis, which is crucial for proper mucus clearance. The sequence is that of Epithelial sodium channel subunit gamma from Mus musculus (Mouse).